Reading from the N-terminus, the 873-residue chain is Zinc fingers and homeoboxes protein 1 (873 aa).

The interval 24–63 is disordered; that stretch reads LISDLDEGPPVLTPVENTRAESISSDEEVHESVDSDNQQN. T36 is subject to Phosphothreonine. Phosphoserine is present on residues S45, S47, and S48. 2 consecutive C2H2-type zinc fingers follow at residues 70–93 and 102–125; these read YECK…DSEH and YVCV…LKYH. K159 participates in a covalent cross-link: Glycyl lysine isopeptide (Lys-Gly) (interchain with G-Cter in SUMO2). The segment at 200-236 is disordered; that stretch reads HNSVEDVPEEKENEIKPDREEIVENPSSSASESNTST. A Phosphoserine modification is found at S202. The segment covering 212 to 221 has biased composition (basic and acidic residues); the sequence is NEIKPDREEI. Residues 223 to 236 show a composition bias toward low complexity; that stretch reads ENPSSSASESNTST. Positions 272–432 are required for dimerization; the sequence is NSNLIPKVLI…QNNIQKSQVP (161 aa). Residues 272-564 are required for interaction with NFYA; that stretch reads NSNLIPKVLI…AQPKQSWNPF (293 aa). Positions 284–346 form a DNA-binding region, homeobox 1; that stretch reads NSIPTYNAAL…LKHGVSWTPE (63 aa). Glycyl lysine isopeptide (Lys-Gly) (interchain with G-Cter in SUMO2) cross-links involve residues K441, K454, K485, and K629. DNA-binding regions (homeobox) lie at residues 464–526 and 569–630; these read SFGI…KSNQ and PQKF…EEKM. 2 disordered regions span residues 626 to 667 and 732 to 769; these read KEEK…ICKK and SSMN…INNW. S648 is subject to Phosphoserine. The segment at residues 660–722 is a DNA-binding region (homeobox 4); it reads STGKICKKTP…YAWKNGNLKW (63 aa). The segment at 734–768 is required for nuclear localization; it reads MNGLSSLRKRGRGRPKGRGRGRPRGRPRGSKRINN. Over residues 740 to 764 the composition is skewed to basic residues; it reads LRKRGRGRPKGRGRGRPRGRPRGSK. Position 774 is a phosphoserine (S774). The homeobox 5 DNA-binding region spans 777 to 832; sequence KFKTGTAILKDYYLKHKFLNEQDLDELVNKSHMGYEQVREWFAERQRRSELGIELF. Residues 829–873 are disordered; the sequence is IELFEENEEEDEVIDDQEEDEEETDDSDTWEPPRHVKRKLSKSDD. A compositionally biased stretch (acidic residues) spans 831–857; that stretch reads LFEENEEEDEVIDDQEEDEEETDDSDT. A required for repressor activity region spans residues 831–873; the sequence is LFEENEEEDEVIDDQEEDEEETDDSDTWEPPRHVKRKLSKSDD. Residues 863-873 show a composition bias toward basic residues; it reads HVKRKLSKSDD.

Belongs to the ZHX family. Forms homodimers. Heterodimer (via HD1 domain) with ZHX2 (via HD1 domain). Also forms a heterodimer with ZHX3 which is a prerequisite for repressor activity. Interacts with ATF7IP and NFYA. Interacts (via homeobox domains) with DNMT3B (via PWWP domain).

It is found in the nucleus. In terms of biological role, acts as a transcriptional repressor. Increases DNMT3B-mediated repressive transcriptional activity when DNMT3B is tethered to DNA. May link molecule between DNMT3B and other co-repressor proteins. The sequence is that of Zinc fingers and homeoboxes protein 1 (ZHX1) from Pan troglodytes (Chimpanzee).